Reading from the N-terminus, the 491-residue chain is Chromosomal replication initiator protein DnaA (491 aa).

A domain I, interacts with DnaA modulators region spans residues 1-69 (MTTWDKCLKK…TIQECHGNDL (69 aa)). The tract at residues 69-154 (LIIEYSNKKF…KEDEEYSFGL (86 aa)) is domain II. The segment at 155-371 (PLKEKYVFDS…GALNRVLTTS (217 aa)) is domain III, AAA+ region. Glycine 199, glycine 201, lysine 202, and threonine 203 together coordinate ATP. Positions 372-491 (KFNHKDPTIE…YELLLNKISR (120 aa)) are domain IV, binds dsDNA.

It belongs to the DnaA family. Oligomerizes as a right-handed, spiral filament on DNA at oriC.

It is found in the cytoplasm. In terms of biological role, plays an essential role in the initiation and regulation of chromosomal replication. ATP-DnaA binds to the origin of replication (oriC) to initiate formation of the DNA replication initiation complex once per cell cycle. Binds the DnaA box (a 9 base pair repeat at the origin) and separates the double-stranded (ds)DNA. Forms a right-handed helical filament on oriC DNA; dsDNA binds to the exterior of the filament while single-stranded (ss)DNA is stabiized in the filament's interior. The ATP-DnaA-oriC complex binds and stabilizes one strand of the AT-rich DNA unwinding element (DUE), permitting loading of DNA polymerase. After initiation quickly degrades to an ADP-DnaA complex that is not apt for DNA replication. Binds acidic phospholipids. The sequence is that of Chromosomal replication initiator protein DnaA from Francisella tularensis subsp. tularensis (strain WY96-3418).